The chain runs to 358 residues: Ethanol acetyltransferase 1 (358 aa).

In terms of domain architecture, AB hydrolase-1 spans 59–166 (PIVFIHGLFG…NAPINQPHIS (108 aa)). Catalysis depends on charge relay system residues Ser132, Asp156, and His305.

Belongs to the AB hydrolase superfamily.

Its subcellular location is the mitochondrion. The enzyme catalyses ethanol + acetyl-CoA = ethyl acetate + CoA. It catalyses the reaction acetyl-CoA + H2O = acetate + CoA + H(+). It carries out the reaction ethyl acetate + H2O = ethanol + acetate + H(+). In terms of biological role, alcohol acetyltransferase that catalyzes the synthesis of ethyl acetate from ethanol and acetyl-CoA. Can also function as a thioesterase by hydrolyzing acetyl-CoA in the absence of ethanol, as well as esterase hydrolyzing ethyl acetate. The chain is Ethanol acetyltransferase 1 (EAT1) from Eremothecium cymbalariae (strain CBS 270.75 / DBVPG 7215 / KCTC 17166 / NRRL Y-17582) (Yeast).